Here is a 257-residue protein sequence, read N- to C-terminus: Ciliary microtubule associated protein 1B (257 aa).

STPGR repeat units lie at residues Pro103 to Arg129, Pro182 to Arg207, and Pro218 to Arg243.

Belongs to the CIMAP family.

The protein resides in the cell projection. Its subcellular location is the cilium. The protein localises to the flagellum. In Danio rerio (Zebrafish), this protein is Ciliary microtubule associated protein 1B (cimap1b).